The primary structure comprises 290 residues: D-tagatose-1,6-bisphosphate aldolase subunit KbaY (290 aa).

Residue aspartate 82 is the Proton donor of the active site. 2 residues coordinate Zn(2+): histidine 83 and histidine 180. Glycine 181 contributes to the dihydroxyacetone phosphate binding site. Position 208 (histidine 208) interacts with Zn(2+). Residues 209–211 and 230–233 contribute to the dihydroxyacetone phosphate site; these read GAS and NVAT.

It belongs to the class II fructose-bisphosphate aldolase family. TagBP aldolase KbaY subfamily. As to quaternary structure, homotetramer. Forms a complex with KbaZ. It depends on Zn(2+) as a cofactor.

The enzyme catalyses D-tagatofuranose 1,6-bisphosphate = D-glyceraldehyde 3-phosphate + dihydroxyacetone phosphate. It participates in carbohydrate metabolism; D-tagatose 6-phosphate degradation; D-glyceraldehyde 3-phosphate and glycerone phosphate from D-tagatose 6-phosphate: step 2/2. Functionally, catalytic subunit of the tagatose-1,6-bisphosphate aldolase KbaYZ, which catalyzes the reversible aldol condensation of dihydroxyacetone phosphate (DHAP or glycerone-phosphate) with glyceraldehyde 3-phosphate (G3P) to produce tagatose 1,6-bisphosphate (TBP). Requires KbaZ subunit for full activity and stability. This is D-tagatose-1,6-bisphosphate aldolase subunit KbaY from Citrobacter koseri (strain ATCC BAA-895 / CDC 4225-83 / SGSC4696).